Consider the following 66-residue polypeptide: Large ribosomal subunit protein uL29 (66 aa).

The protein belongs to the universal ribosomal protein uL29 family.

The chain is Large ribosomal subunit protein uL29 from Borrelia hermsii (strain HS1 / DAH).